A 254-amino-acid chain; its full sequence is Dihydroorotate dehydrogenase B (NAD(+)), electron transfer subunit (254 aa).

Positions 1-99 (MLQTEMKVIQ…LGPLGKGFDL (99 aa)) constitute an FAD-binding FR-type domain. Residues 50–53 (RPIS), 67–69 (LYR), and 74–75 (GT) each bind FAD. Residues C218, C223, C226, and C241 each coordinate [2Fe-2S] cluster.

It belongs to the PyrK family. In terms of assembly, heterotetramer of 2 PyrK and 2 PyrD type B subunits. The cofactor is [2Fe-2S] cluster. FAD is required as a cofactor.

It functions in the pathway pyrimidine metabolism; UMP biosynthesis via de novo pathway; orotate from (S)-dihydroorotate (NAD(+) route): step 1/1. Functionally, responsible for channeling the electrons from the oxidation of dihydroorotate from the FMN redox center in the PyrD type B subunit to the ultimate electron acceptor NAD(+). The protein is Dihydroorotate dehydrogenase B (NAD(+)), electron transfer subunit of Listeria innocua serovar 6a (strain ATCC BAA-680 / CLIP 11262).